We begin with the raw amino-acid sequence, 462 residues long: MTVPQYIGPNRTGITVIIIGLGIGGLTAAISCHLQGHHVIGFDKLENLEPYGDGLILTPNGSQVLRDLDDTGAIAAWINTWAYNCRDCKIYNTDGVHVGQHPIPDTDKGLSLLPRGGLVQILYQTAKRLGLDLRLGVKINEFVEDVDQARVIIDGVHVQGDCIIFADGANSRGREAVSSCNVKPYYSGFSVYRGRADGAALIKDPQCHWLLSKEGAIDQATGFAGPEMYVQLATCGGGQASFCIGITQRFALQHTQSAENFWTTPIDKNEMLDKISYWKCINQIRPVIDKMAKDQFILCPLLRAGVLDSWVSPIGRIAVIGDAAHPFFPTSAQGAAQAIEDAATLAITLALAGKNNIRLGLKAMEAMRKHRATYIQRNAWRVNDAWFGSPVEERIGEKAAPAIGVIDWITEHCCRTYASNEFDRVQDSIATGQPYVPTNIPSQQFKEAAEWIANRNDEKEKN.

Asn-10 carries an N-linked (GlcNAc...) asparagine glycan. Residues 14 to 34 (ITVIIIGLGIGGLTAAISCHL) form a helical membrane-spanning segment. Position 43 (Asp-43) interacts with FAD. Residue Asn-60 is glycosylated (N-linked (GlcNAc...) asparagine). Arg-115 is a binding site for FAD. Arg-193 is an active-site residue. The FAD site is built by Asp-322 and Ala-335.

It belongs to the paxM FAD-dependent monooxygenase family. FAD is required as a cofactor.

The protein resides in the membrane. Its pathway is secondary metabolite biosynthesis. In terms of biological role, FAD-dependent monooxygenase; part of the gene cluster that mediates the biosynthesis of oxepinamides, derivatives of anthranilyl-containing tripeptides that share an oxepin ring and a fused pyrimidinone moiety. The nonribosomal peptide synthetase (NRPS) opaA assembles the quinazolinone core with D-Phe incorporation. The first adenylation domain (A1) of opaA loads and activates anthranilic acid whereas the second A domain (A2) is for activating of L-Phe, which is then converted to D-form by the E domain. The third A domain (A3) is responsible for L-Ile activation and the terminal condensation domain C3 for cyclization and releasing the NRPS product protuboxepin K. The cytochrome P450 monooxygenase opaB then catalyzes alone the oxepin ring formation to convert protuboxepin K into protuboxepin A. The flavoenzyme opaC installs subsequently one hydroxyl group at the oxepin ring, accompanied by double bond migration, to form 15-epi-oxepinamide E. The epimerase opaE changes the D-Phe residue back to L-form, leading to oxepinamide E, which is further methylated at the hydroxyl group at C-12 by the O-methyltransferase OpaF to yield oxepinamide F. In Aspergillus ustus, this protein is FAD-dependent monooxygenase opaC.